We begin with the raw amino-acid sequence, 102 residues long: Large ribosomal subunit protein bL21 (102 aa).

The protein belongs to the bacterial ribosomal protein bL21 family. In terms of assembly, part of the 50S ribosomal subunit. Contacts protein L20.

This protein binds to 23S rRNA in the presence of protein L20. The protein is Large ribosomal subunit protein bL21 of Syntrophotalea carbinolica (strain DSM 2380 / NBRC 103641 / GraBd1) (Pelobacter carbinolicus).